The chain runs to 1071 residues: MKLIYTEMSYSMTEILVNEARKAADQGYRVFYIAPNSLSFEKEREVLTLLPERGTFSIIVTRFVQMSRYFTVESSPSKQHLDDTTLAMIFYRALMQLKPEDLPSYGRLQNNSVFIEQLVELYKELKNAQLSVHDLTGLDHPQKQEDLIKIIELAETIMIQQDYNQDSPLQSFARAIKLGLLNNQLSKTVVVIDGFSRFSAEEDYLLSLLNNNCQEVIIGSYVSQKAYQKSFIKGNIYEASLHFLQDLAQKYHIKPVFATSNQVFKPAFSRLTQLFEATHDFSQVDWQLQKNDLDHFSLWQCHHQKEEIEHVAKSIRQKLYEGYRYKDILVLLGDMDAYQLQIGPIFDKFEIPYYLGKAEPMAAHPLVQFIESLERSQRYNWRREDILNMLKSGLFGCFDDSDIDRFEEYTQFADIKGFTKFSKPFTINSSRQYPLDFLNEMRQDIVLPLQELFKSQKQLGASLVDKLILFLKKIRLAENMQGLAQSQLEVEKNEEVWKRFTDILTSFHHIFGQEKLRLSDCLALIKTGMKSAQYRVVPATLDVVTIKSYDLVQPHSKPFVYAIGLTQSHFPKQIHHSGLLSDQERARINEIRNYRHFDIASAENSKKNHQTALSLFNAATKELVLSVPTVINETFDDLSPYLKELINFGLPLLDKGKNYLSYDNSDIGNYKALLSQIIAINRQDLIEMSDQDKMFWTVVLRYLRKQLRKQQLELPTSDYRLSTKSLSKEVIEVCFPKRIPLKLSATALTVFYNNQYNYFLKYVLNLNKTESIHPDSRIHGQYLHRVFERLMKDHTQEPFDNKLKQAIYHTNQESFFQQIYQDNAEAEYSLAILEDIVRSTAPILQLNQNIQVIDQEKNFHLDMGNEILVHGIIDRIDQLSDGSLGIVDYKSSANQFDIGTFYNGLSPQLVTYLAALKQITPHDINQLFGAMYLHLQDPKLDLVTFKQIDNTLVESIYKALTYKGIFSEVEKEHLSTGAYQTKNALYSNDELETLLNYNRYLYLKAAKHIKKGHFLINPYTSDGKTVQGDQLKAITRFEADLDMGQARRLVTLPAKEKKECFLTLMRKESHL.

This sequence belongs to the helicase family. AddB/RexB type 2 subfamily. Heterodimer of AddA and RexB. Mg(2+) serves as cofactor.

Its function is as follows. The heterodimer acts as both an ATP-dependent DNA helicase and an ATP-dependent, dual-direction single-stranded exonuclease. Recognizes the chi site generating a DNA molecule suitable for the initiation of homologous recombination. This subunit has 5' -&gt; 3' nuclease activity but not helicase activity. This Streptococcus pyogenes serotype M3 (strain ATCC BAA-595 / MGAS315) protein is ATP-dependent helicase/deoxyribonuclease subunit B.